The sequence spans 732 residues: Nephrocystin-1 (732 aa).

Positions 3 to 105 (ARRQRDPLQA…LQGLAVTISR (103 aa)) form a coiled coil. Phosphotyrosine; by FAK2 is present on Y46. Disordered regions lie at residues 103–153 (ISRE…KWST) and 205–244 (TYLEPYSEEEEGQESSEEGSEEDVEAVDETADGAEVKQRT). Acidic residues-rich tracts occupy residues 115–145 (TEEEEESESEDSEDSGGEEEDAEEEEEEKEE) and 210–236 (YSEEEEGQESSEEGSEEDVEAVDETAD). 3 positions are modified to phosphoserine; by CK2: S121, S123, and S126. A coiled-coil region spans residues 127 to 150 (EDSGGEEEDAEEEEEEKEENESHK). In terms of domain architecture, SH3 spans 152–212 (STGEEYIAVG…PRTYLEPYSE (61 aa)). Y349 bears the Phosphotyrosine; by FAK2 mark. At Y721 the chain carries Phosphotyrosine; by SRC.

It belongs to the nephrocystin-1 family. As to quaternary structure, interacts with BCAR1, PTK2B/PYK2 and tensin. Interacts with INVS and NPHP3. Interacts with PACS1; the interaction is dependent on NPHP1 phosphorylation by CK2. Interacts with KIF7. Interacts with AHI1 and TNK2. Interacts with NPHP4 in a complex containing NPHP1, NPHP4 and RPGRIP1L. Interacts with IQCB1; the interaction likely requires additional interactors. Interacts with ANKS3. Interacts with SPATA7. Interacts with FLNA. Phosphorylation by CK2 is required for the interaction with PACS1 and the targeting to the base region of cilia. As to expression, widespread expression, with highest levels in pituitary gland, spinal cord, thyroid gland, testis, skeletal muscle, lymph node and trachea. Weakly expressed in heart, kidney and pancreas. Expressed in nasal epithelial cells (at protein level). Expressed in the renal collecting duct (at protein level).

Its subcellular location is the cell junction. The protein resides in the adherens junction. The protein localises to the cell projection. It localises to the cilium. It is found in the cytoplasm. Its subcellular location is the cytoskeleton. The protein resides in the cilium axoneme. The protein localises to the tight junction. Its function is as follows. Together with BCAR1 it may play a role in the control of epithelial cell polarity. Involved in the organization of apical junctions in kidney cells together with NPHP4 and RPGRIP1L/NPHP8. Does not seem to be strictly required for ciliogenesis. Seems to help to recruit PTK2B/PYK2 to cell matrix adhesions, thereby initiating phosphorylation of PTK2B/PYK2 and PTK2B/PYK2-dependent signaling. May play a role in the regulation of intraflagellar transport (IFT) during cilia assembly. Required for normal retina development. In connecting photoreceptor cilia influences the movement of some IFT proteins such as IFT88 and WDR19. Involved in spermatogenesis. This is Nephrocystin-1 (NPHP1) from Homo sapiens (Human).